Reading from the N-terminus, the 346-residue chain is Isopentenyl-diphosphate delta-isomerase (346 aa).

Residue 9–10 (RK) participates in substrate binding. Residues S67, 68–70 (SMT), S98, and N127 each bind FMN. 98-100 (SQR) provides a ligand contact to substrate. Substrate is bound at residue Q162. Residue E163 coordinates Mg(2+). FMN-binding positions include K194, T224, 274–276 (GIR), and 295–296 (AA).

It belongs to the IPP isomerase type 2 family. In terms of assembly, homooctamer. Dimer of tetramers. It depends on FMN as a cofactor. The cofactor is NADPH. Mg(2+) serves as cofactor.

The protein localises to the cytoplasm. It carries out the reaction isopentenyl diphosphate = dimethylallyl diphosphate. Functionally, involved in the biosynthesis of isoprenoids. Catalyzes the 1,3-allylic rearrangement of the homoallylic substrate isopentenyl (IPP) to its allylic isomer, dimethylallyl diphosphate (DMAPP). This Stutzerimonas stutzeri (strain A1501) (Pseudomonas stutzeri) protein is Isopentenyl-diphosphate delta-isomerase.